A 112-amino-acid chain; its full sequence is Low molecular weight protein antigen 6 (112 aa).

The protein resides in the secreted. This chain is Low molecular weight protein antigen 6 (cfp6), found in Mycobacterium bovis (strain ATCC BAA-935 / AF2122/97).